A 310-amino-acid polypeptide reads, in one-letter code: Ribose-phosphate pyrophosphokinase (310 aa).

Residues 34 to 36 (DQE) and 93 to 94 (RQ) contribute to the ATP site. Mg(2+)-binding residues include His-127 and Asp-167. Lys-190 is a catalytic residue. D-ribose 5-phosphate-binding positions include Arg-192, Asp-216, and 220 to 224 (DSGGT).

This sequence belongs to the ribose-phosphate pyrophosphokinase family. Class I subfamily. Homohexamer. It depends on Mg(2+) as a cofactor.

The protein localises to the cytoplasm. The catalysed reaction is D-ribose 5-phosphate + ATP = 5-phospho-alpha-D-ribose 1-diphosphate + AMP + H(+). It participates in metabolic intermediate biosynthesis; 5-phospho-alpha-D-ribose 1-diphosphate biosynthesis; 5-phospho-alpha-D-ribose 1-diphosphate from D-ribose 5-phosphate (route I): step 1/1. Involved in the biosynthesis of the central metabolite phospho-alpha-D-ribosyl-1-pyrophosphate (PRPP) via the transfer of pyrophosphoryl group from ATP to 1-hydroxyl of ribose-5-phosphate (Rib-5-P). The protein is Ribose-phosphate pyrophosphokinase of Agrobacterium fabrum (strain C58 / ATCC 33970) (Agrobacterium tumefaciens (strain C58)).